The chain runs to 326 residues: Eukaryotic translation initiation factor 3 subunit I (326 aa).

WD repeat units follow at residues 8–47 (GHER…RLGT), 50–89 (GHQG…VIAS), 145–184 (MTES…KVVD), 188–227 (DHSA…CLKT), and 285–326 (GHFG…NIFE).

Belongs to the eIF-3 subunit I family. As to quaternary structure, component of the eukaryotic translation initiation factor 3 (eIF-3) complex. The eIF-3 complex interacts with pix.

It localises to the cytoplasm. Component of the eukaryotic translation initiation factor 3 (eIF-3) complex, which is involved in protein synthesis of a specialized repertoire of mRNAs and, together with other initiation factors, stimulates binding of mRNA and methionyl-tRNAi to the 40S ribosome. The eIF-3 complex specifically targets and initiates translation of a subset of mRNAs involved in cell proliferation. The chain is Eukaryotic translation initiation factor 3 subunit I from Drosophila erecta (Fruit fly).